A 110-amino-acid chain; its full sequence is Large ribosomal subunit protein uL22 (110 aa).

Belongs to the universal ribosomal protein uL22 family. In terms of assembly, part of the 50S ribosomal subunit.

Its function is as follows. This protein binds specifically to 23S rRNA; its binding is stimulated by other ribosomal proteins, e.g. L4, L17, and L20. It is important during the early stages of 50S assembly. It makes multiple contacts with different domains of the 23S rRNA in the assembled 50S subunit and ribosome. Functionally, the globular domain of the protein is located near the polypeptide exit tunnel on the outside of the subunit, while an extended beta-hairpin is found that lines the wall of the exit tunnel in the center of the 70S ribosome. This Janthinobacterium sp. (strain Marseille) (Minibacterium massiliensis) protein is Large ribosomal subunit protein uL22.